The sequence spans 838 residues: pre-rRNA 2'-O-ribose RNA methyltransferase FTSJ3 (838 aa).

5 residues coordinate S-adenosyl-L-methionine: Gly-56, Trp-58, Asp-76, Asp-92, and Asp-117. Lys-157 (proton acceptor) is an active-site residue. Residues 332 to 367 (ISLSSEEEEEGDEEEAVAETKQAPEEEEEREEEQLN) are disordered. 3 positions are modified to phosphoserine: Ser-333, Ser-335, and Ser-336. Positions 336-348 (SEEEEEGDEEEAV) are enriched in acidic residues. Arg-390 carries the post-translational modification Citrulline. A disordered region spans residues 453 to 482 (IYVSDAEDDDDTSLESDLDPEELAGVRTHS). Residues 457-474 (DAEDDDDTSLESDLDPEE) show a composition bias toward acidic residues. Phosphoserine occurs at positions 532 and 545. The interval 537–639 (DADEALEISQ…GRGSKADEDG (103 aa)) is disordered. Lys-571 participates in a covalent cross-link: Glycyl lysine isopeptide (Lys-Gly) (interchain with G-Cter in SUMO2). Ser-576 carries the phosphoserine modification. Glycyl lysine isopeptide (Lys-Gly) (interchain with G-Cter in SUMO2) cross-links involve residues Lys-634 and Lys-650. Ser-667 bears the Phosphoserine mark. A Glycyl lysine isopeptide (Lys-Gly) (interchain with G-Cter in SUMO2) cross-link involves residue Lys-669. Ser-679 is subject to Phosphoserine. A Glycyl lysine isopeptide (Lys-Gly) (interchain with G-Cter in SUMO2) cross-link involves residue Lys-701. Residues 730–768 (IKKVAEAKARKKRRVLKKLEQTKKKAEAVVNTVDISERE) adopt a coiled-coil conformation. Arg-774 is subject to Citrulline. Basic residues predominate over residues 802–812 (VRRPAGVKGHF). Residues 802-838 (VRRPAGVKGHFKVVDSRMKKDQRAQQRKEQKKKHKRK) are disordered. Positions 813-829 (KVVDSRMKKDQRAQQRK) are enriched in basic and acidic residues.

It belongs to the class I-like SAM-binding methyltransferase superfamily. RNA methyltransferase RlmE family. SPB1 subfamily. Interacts with NIP7. Post-translationally, citrullinated by PADI4.

Its subcellular location is the nucleus. The protein localises to the nucleolus. It carries out the reaction a ribonucleotide in rRNA + S-adenosyl-L-methionine = a 2'-O-methylribonucleotide in rRNA + S-adenosyl-L-homocysteine + H(+). Its function is as follows. RNA 2'-O-methyltransferase involved in the processing of the 34S pre-rRNA to 18S rRNA and in 40S ribosomal subunit formation. The chain is pre-rRNA 2'-O-ribose RNA methyltransferase FTSJ3 (Ftsj3) from Mus musculus (Mouse).